Consider the following 321-residue polypeptide: Lipoyl synthase (321 aa).

C68, C73, C79, C94, C98, C101, and S308 together coordinate [4Fe-4S] cluster. A Radical SAM core domain is found at 80–297; it reads FNHGTATFMI…KVIAEDLGFS (218 aa).

This sequence belongs to the radical SAM superfamily. Lipoyl synthase family. The cofactor is [4Fe-4S] cluster.

It is found in the cytoplasm. The enzyme catalyses [[Fe-S] cluster scaffold protein carrying a second [4Fe-4S](2+) cluster] + N(6)-octanoyl-L-lysyl-[protein] + 2 oxidized [2Fe-2S]-[ferredoxin] + 2 S-adenosyl-L-methionine + 4 H(+) = [[Fe-S] cluster scaffold protein] + N(6)-[(R)-dihydrolipoyl]-L-lysyl-[protein] + 4 Fe(3+) + 2 hydrogen sulfide + 2 5'-deoxyadenosine + 2 L-methionine + 2 reduced [2Fe-2S]-[ferredoxin]. Its pathway is protein modification; protein lipoylation via endogenous pathway; protein N(6)-(lipoyl)lysine from octanoyl-[acyl-carrier-protein]: step 2/2. Its function is as follows. Catalyzes the radical-mediated insertion of two sulfur atoms into the C-6 and C-8 positions of the octanoyl moiety bound to the lipoyl domains of lipoate-dependent enzymes, thereby converting the octanoylated domains into lipoylated derivatives. The polypeptide is Lipoyl synthase (Shewanella amazonensis (strain ATCC BAA-1098 / SB2B)).